The following is a 731-amino-acid chain: MTEFYSDTIGLPKTDPRLWRLRTDELGRESWEYLTPQQAANDPPSTFTQWLLQDPKFPQPHPERNKHSPDFSAFDACHNGASFFKLLQEPDSGIFPCQYKGPMFMTIGYVAVNYIAGIEIPEHERIELIRYIVNTAHPVDGGWGLHSVDKSTVFGTVLNYVILRLLGLPKDHPVCAKARSTLLRLGGAIGSPHWGKIWLSALNLYKWEGVNPAPPETWLLPYSLPMHPGRWWVHTRGVYIPVSYLSLVKFSCPMTPLLEELRNEIYTKPFDKINFSKNRNTVCGVDLYYPHSTTLNIANSLVVFYEKYLRNRFIYSLSKKKVYDLIKTELQNTDSLCIAPVNQAFCALVTLIEEGVDSEAFQRLQYRFKDALFHGPQGMTIMGTNGVQTWDCAFAIQYFFVAGLAERPEFYNTIVSAYKFLCHAQFDTECVPGSYRDKRKGAWGFSTKTQGYTVADCTAEAIKAIIMVKNSPVFSEVHHMISSERLFEGIDVLLNLQNIGSFEYGSFATYEKIKAPLAMETLNPAEVFGNIMVEYPYVECTDSSVLGLTYFHKYFDYRKEEIRTRIRIAIEFIKKSQLPDGSWYGSWGICFTYAGMFALEALHTVGETYENSSTVRKGCDFLVSKQMKDGGWGESMKSSELHSYVDSEKSLVVQTAWALIALLFAEYPNKEVIDRGIDLLKNRQEESGEWKFESVEGVFNHSCAIEYPSYRFLFPIKALGMYSRAYETHTL.

Thr-2 carries the post-translational modification N-acetylthreonine. The PFTB 1 repeat unit spans residues 125 to 167 (RIELIRYIVNTAHPVDGGWGLHSVDKSTVFGTVLNYVILRLLG). The active-site Proton donor is Asp-456. The PFTB 2 repeat unit spans residues 615-661 (VRKGCDFLVSKQMKDGGWGESMKSSELHSYVDSEKSLVVQTAWALIA).

The protein belongs to the terpene cyclase/mutase family.

The protein resides in the lipid droplet. Its subcellular location is the endoplasmic reticulum membrane. It carries out the reaction (S)-2,3-epoxysqualene = lanosterol. Its pathway is terpene metabolism; lanosterol biosynthesis; lanosterol from farnesyl diphosphate: step 3/3. With respect to regulation, catalytic activity requires the presence of ERG27. Functionally, lanosterol synthase; part of the third module of ergosterol biosynthesis pathway that includes the late steps of the pathway. ERG7 catalyzes the cyclization of (S)-2,3 oxidosqualene to lanosterol, a reaction that forms the sterol core. The third module or late pathway involves the ergosterol synthesis itself through consecutive reactions that mainly occur in the endoplasmic reticulum (ER) membrane. Firstly, the squalene synthase ERG9 catalyzes the condensation of 2 farnesyl pyrophosphate moieties to form squalene, which is the precursor of all steroids. Squalene synthase is crucial for balancing the incorporation of farnesyl diphosphate (FPP) into sterol and nonsterol isoprene synthesis. Secondly, the squalene epoxidase ERG1 catalyzes the stereospecific oxidation of squalene to (S)-2,3-epoxysqualene, which is considered to be a rate-limiting enzyme in steroid biosynthesis. Then, the lanosterol synthase ERG7 catalyzes the cyclization of (S)-2,3 oxidosqualene to lanosterol, a reaction that forms the sterol core. In the next steps, lanosterol is transformed to zymosterol through a complex process involving various demethylation, reduction and desaturation reactions. The lanosterol 14-alpha-demethylase ERG11 (also known as CYP51) catalyzes C14-demethylation of lanosterol to produce 4,4'-dimethyl cholesta-8,14,24-triene-3-beta-ol, which is critical for ergosterol biosynthesis. The C-14 reductase ERG24 reduces the C14=C15 double bond of 4,4-dimethyl-cholesta-8,14,24-trienol to produce 4,4-dimethyl-cholesta-8,24-dienol. 4,4-dimethyl-cholesta-8,24-dienol is substrate of the C-4 demethylation complex ERG25-ERG26-ERG27 in which ERG25 catalyzes the three-step monooxygenation required for the demethylation of 4,4-dimethyl and 4alpha-methylsterols, ERG26 catalyzes the oxidative decarboxylation that results in a reduction of the 3-beta-hydroxy group at the C-3 carbon to an oxo group, and ERG27 is responsible for the reduction of the keto group on the C-3. ERG28 has a role as a scaffold to help anchor ERG25, ERG26 and ERG27 to the endoplasmic reticulum and ERG29 regulates the activity of the iron-containing C4-methylsterol oxidase ERG25. Then, the sterol 24-C-methyltransferase ERG6 catalyzes the methyl transfer from S-adenosyl-methionine to the C-24 of zymosterol to form fecosterol. The C-8 sterol isomerase ERG2 catalyzes the reaction which results in unsaturation at C-7 in the B ring of sterols and thus converts fecosterol to episterol. The sterol-C5-desaturase ERG3 then catalyzes the introduction of a C-5 double bond in the B ring to produce 5-dehydroepisterol. The C-22 sterol desaturase ERG5 further converts 5-dehydroepisterol into ergosta-5,7,22,24(28)-tetraen-3beta-ol by forming the C-22(23) double bond in the sterol side chain. Finally, ergosta-5,7,22,24(28)-tetraen-3beta-ol is substrate of the C-24(28) sterol reductase ERG4 to produce ergosterol. This Saccharomyces cerevisiae (strain ATCC 204508 / S288c) (Baker's yeast) protein is Lanosterol synthase ERG7.